The following is a 739-amino-acid chain: Probable beta-glucosidase L (739 aa).

The N-terminal stretch at 1–17 (MQTLFLSLLAAAVTVHA) is a signal peptide. 2 N-linked (GlcNAc...) asparagine glycosylation sites follow: Asn-40 and Asn-224. Asp-252 is an active-site residue. Residue Asn-398 is glycosylated (N-linked (GlcNAc...) asparagine).

This sequence belongs to the glycosyl hydrolase 3 family.

It is found in the secreted. The enzyme catalyses Hydrolysis of terminal, non-reducing beta-D-glucosyl residues with release of beta-D-glucose.. It functions in the pathway glycan metabolism; cellulose degradation. Functionally, beta-glucosidases are one of a number of cellulolytic enzymes involved in the degradation of cellulosic biomass. Catalyzes the last step releasing glucose from the inhibitory cellobiose. In Aspergillus fumigatus (strain CBS 144.89 / FGSC A1163 / CEA10) (Neosartorya fumigata), this protein is Probable beta-glucosidase L (bglL).